A 220-amino-acid chain; its full sequence is 7-cyano-7-deazaguanine synthase (220 aa).

Position 10–20 (10–20) interacts with ATP; it reads FSGGQDSTTCL. 4 residues coordinate Zn(2+): Cys-186, Cys-195, Cys-198, and Cys-201.

Belongs to the QueC family. Homodimer. Zn(2+) is required as a cofactor.

The catalysed reaction is 7-carboxy-7-deazaguanine + NH4(+) + ATP = 7-cyano-7-deazaguanine + ADP + phosphate + H2O + H(+). The protein operates within purine metabolism; 7-cyano-7-deazaguanine biosynthesis. In terms of biological role, catalyzes the ATP-dependent conversion of 7-carboxy-7-deazaguanine (CDG) to 7-cyano-7-deazaguanine (preQ(0)). In Bacillus mycoides (strain KBAB4) (Bacillus weihenstephanensis), this protein is 7-cyano-7-deazaguanine synthase.